The primary structure comprises 199 residues: NAD(P)H dehydrogenase (quinone) 1 (199 aa).

The region spanning 4 to 190 (VLVLYYSAYG…EAARFQGAHV (187 aa)) is the Flavodoxin-like domain. FMN is bound by residues 10-15 (SAYGHI) and 78-80 (TRY). Residue Tyr12 participates in NAD(+) binding. A substrate-binding site is contributed by Trp98. FMN is bound by residues 113-119 (SSATQHG) and His134.

It belongs to the WrbA family. The cofactor is FMN.

It catalyses the reaction a quinone + NADH + H(+) = a quinol + NAD(+). The enzyme catalyses a quinone + NADPH + H(+) = a quinol + NADP(+). This chain is NAD(P)H dehydrogenase (quinone) 1, found in Rhizobium meliloti (strain 1021) (Ensifer meliloti).